The sequence spans 501 residues: Carotenoid cleavage oxygenase (501 aa).

Histidine 162, histidine 211, histidine 314, and histidine 494 together coordinate Fe cation.

This sequence belongs to the carotenoid oxygenase family. Fe(2+) is required as a cofactor.

Its function is as follows. Catalyzes the oxidative cleavage of several carotenoids and apocarotenoids in vitro. This Mycobacterium tuberculosis (strain CDC 1551 / Oshkosh) protein is Carotenoid cleavage oxygenase.